The chain runs to 283 residues: Protease HtpX (283 aa).

Transmembrane regions (helical) follow at residues 4-24 (ILLFLATNMAVMLVLGIILNV) and 33-53 (GGILIMALLFGFAGSLISLFL). H139 is a Zn(2+) binding site. The active site involves E140. Position 143 (H143) interacts with Zn(2+). The next 2 helical transmembrane spans lie at 147–167 (GDMVTMALLQGVLNTFVIFLS) and 190–210 (IYFLVSMVLEMLFGVLASIIA). E218 lines the Zn(2+) pocket.

Belongs to the peptidase M48B family. Zn(2+) is required as a cofactor.

Its subcellular location is the cell inner membrane. This Haemophilus influenzae (strain 86-028NP) protein is Protease HtpX.